The following is a 459-amino-acid chain: Exodeoxyribonuclease 7 large subunit (459 aa).

It belongs to the XseA family. As to quaternary structure, heterooligomer composed of large and small subunits.

The protein resides in the cytoplasm. It catalyses the reaction Exonucleolytic cleavage in either 5'- to 3'- or 3'- to 5'-direction to yield nucleoside 5'-phosphates.. In terms of biological role, bidirectionally degrades single-stranded DNA into large acid-insoluble oligonucleotides, which are then degraded further into small acid-soluble oligonucleotides. This chain is Exodeoxyribonuclease 7 large subunit, found in Yersinia pseudotuberculosis serotype IB (strain PB1/+).